The sequence spans 46 residues: Large ribosomal subunit protein bL36 (46 aa).

Belongs to the bacterial ribosomal protein bL36 family.

The sequence is that of Large ribosomal subunit protein bL36 from Serratia proteamaculans (strain 568).